Reading from the N-terminus, the 218-residue chain is Adenylate kinase (218 aa).

Residue 10-15 (GAGKGT) coordinates ATP. The segment at 30–59 (STGDMLRAAVKAGTPLGQQAKAVMESGGLV) is NMP. AMP-binding positions include Thr31, Arg36, 57–59 (GLV), 85–88 (GFPR), and Gln92. The tract at residues 122 to 159 (GRRSHPASGRTYHVKFNPPKVEGKDDITGEDLIQRKDD) is LID. ATP-binding positions include Arg123 and 132 to 133 (TY). The AMP site is built by Arg156 and Arg167. Gly203 provides a ligand contact to ATP.

The protein belongs to the adenylate kinase family. As to quaternary structure, monomer.

The protein resides in the cytoplasm. It carries out the reaction AMP + ATP = 2 ADP. The protein operates within purine metabolism; AMP biosynthesis via salvage pathway; AMP from ADP: step 1/1. Catalyzes the reversible transfer of the terminal phosphate group between ATP and AMP. Plays an important role in cellular energy homeostasis and in adenine nucleotide metabolism. This is Adenylate kinase from Variovorax paradoxus (strain S110).